The following is a 964-amino-acid chain: Glycine dehydrogenase (decarboxylating) (964 aa).

Polar residues predominate over residues methionine 1 to threonine 11. The disordered stretch occupies residues methionine 1–leucine 21. Lysine 713 is modified (N6-(pyridoxal phosphate)lysine).

Belongs to the GcvP family. As to quaternary structure, the glycine cleavage system is composed of four proteins: P, T, L and H. Requires pyridoxal 5'-phosphate as cofactor.

It carries out the reaction N(6)-[(R)-lipoyl]-L-lysyl-[glycine-cleavage complex H protein] + glycine + H(+) = N(6)-[(R)-S(8)-aminomethyldihydrolipoyl]-L-lysyl-[glycine-cleavage complex H protein] + CO2. Functionally, the glycine cleavage system catalyzes the degradation of glycine. The P protein binds the alpha-amino group of glycine through its pyridoxal phosphate cofactor; CO(2) is released and the remaining methylamine moiety is then transferred to the lipoamide cofactor of the H protein. The chain is Glycine dehydrogenase (decarboxylating) from Leptospira interrogans serogroup Icterohaemorrhagiae serovar copenhageni (strain Fiocruz L1-130).